The sequence spans 887 residues: Valine--tRNA ligase (887 aa).

Positions 47–57 (PNVTGALHMGH) match the 'HIGH' region motif. The 'KMSKS' region motif lies at 527 to 531 (KMSKS). Lys-530 is a binding site for ATP. The stretch at 817 to 885 (LVNVEEEEKR…LLASLEKIRK (69 aa)) forms a coiled coil.

This sequence belongs to the class-I aminoacyl-tRNA synthetase family. ValS type 1 subfamily. As to quaternary structure, monomer.

It is found in the cytoplasm. The catalysed reaction is tRNA(Val) + L-valine + ATP = L-valyl-tRNA(Val) + AMP + diphosphate. Catalyzes the attachment of valine to tRNA(Val). As ValRS can inadvertently accommodate and process structurally similar amino acids such as threonine, to avoid such errors, it has a 'posttransfer' editing activity that hydrolyzes mischarged Thr-tRNA(Val) in a tRNA-dependent manner. The polypeptide is Valine--tRNA ligase (Geobacter sulfurreducens (strain ATCC 51573 / DSM 12127 / PCA)).